The chain runs to 134 residues: Small ribosomal subunit protein uS12 (134 aa).

The interval 1 to 26 (MPTIQQLVRKGRESFADKSKSPALNS) is disordered. The span at 10–20 (KGRESFADKSK) shows a compositional bias: basic and acidic residues. Position 89 is a 3-methylthioaspartic acid (Asp89). The disordered stretch occupies residues 103–134 (DTAGVNGRTQRRSKYGAKRPKPGQAPAAKGKK). The segment covering 111–123 (TQRRSKYGAKRPK) has biased composition (basic residues). Residues 124–134 (PGQAPAAKGKK) are compositionally biased toward low complexity.

The protein belongs to the universal ribosomal protein uS12 family. Part of the 30S ribosomal subunit. Contacts proteins S8 and S17. May interact with IF1 in the 30S initiation complex.

In terms of biological role, with S4 and S5 plays an important role in translational accuracy. Interacts with and stabilizes bases of the 16S rRNA that are involved in tRNA selection in the A site and with the mRNA backbone. Located at the interface of the 30S and 50S subunits, it traverses the body of the 30S subunit contacting proteins on the other side and probably holding the rRNA structure together. The combined cluster of proteins S8, S12 and S17 appears to hold together the shoulder and platform of the 30S subunit. In Porphyromonas gingivalis (strain ATCC BAA-308 / W83), this protein is Small ribosomal subunit protein uS12.